Here is a 215-residue protein sequence, read N- to C-terminus: Protein C' (215 aa).

The disordered stretch occupies residues 12–34 (MPSFLKKILKLRGRRQEDESRSR). The tract at residues 15 to 22 (FLKKILKL) is involved in self-degradation and in host STAT1 degradation. Residues 25–35 (RRQEDESRSRM) are compositionally biased toward basic and acidic residues. Positions 36–66 (LSDSSTQSYQVNQLTSEETEAGSTIPSTPSK) are enriched in polar residues.

Belongs to the respirovirus protein C family. In terms of assembly, the different isoforms interact (via C-terminus) with unphosphorylated and phosphorylated human STAT1 (via N-terminus), favoring the formation of parallel STAT1 homodimers. The different isoforms do not interact with host STAT2. C protein interacts with L protein; this interaction has an inhibitory effect on viral transcription and replication. Post-translationally, protein Y1 is produced not only by alternative initiation, but also by proteolytic cleavage of C'. Only alternative initiation is detected in vitro, whereas in vivo cleavage seems to be predominant.

The protein resides in the host cytoplasm. Its function is as follows. The different products prevent the establishment of cellular antiviral state by blocking the interferon-alpha/beta (IFN-alpha/beta) and IFN-gamma signaling pathways. They inhibit IFN-alpha/beta induced tyrosine phosphorylation of STAT1 and STAT2. Blocking the IFN-alpha/beta pathway requires binding to STAT1 in the cytoplasm. They inhibit IFN-gamma induced serine phosphorylation of STAT1. Block the IFN-gamma pathway by binding to and stabilizing the parallel form of the STAT1 dimer, further inducing high-molecular-weight complex formation and inhibition of transcription by IFN-gamma. May also have a role in preventing the cell to enter apoptosis. Modulate regulation of viral transcription and replication. Overexpression inhibits the viral RNA polymerase. The absence of all C', C and Y1 proteins leads to viral delayed growth. Plays an important role in virion particles release. Modulates virion shape. This chain is Protein C' (P/V/C), found in Cavia cutleri (Guinea pig).